Reading from the N-terminus, the 417-residue chain is Tumor necrosis factor receptor superfamily member 25 (417 aa).

Positions 1 to 24 (MEQRPRGCAAVAAALLLVLLGARA) are cleaved as a signal peptide. The Extracellular segment spans residues 25-199 (QGGTRSPRCD…RCAAVCGWRQ (175 aa)). TNFR-Cys repeat units lie at residues 34-71 (DCAG…STCL), 72-115 (VCPQ…DTRC), 116-163 (GCKP…TDCG), and 164-192 (TCLP…ERCA). Cystine bridges form between Cys-35/Cys-47, Cys-48/Cys-61, Cys-51/Cys-70, Cys-73/Cys-89, Cys-92/Cys-107, Cys-95/Cys-115, Cys-117/Cys-130, Cys-138/Cys-155, Cys-141/Cys-162, Cys-165/Cys-176, Cys-179/Cys-191, and Cys-187/Cys-195. N-linked (GlcNAc...) asparagine glycosylation occurs at Asn-67. An N-linked (GlcNAc...) asparagine glycan is attached at Asn-106. Residues 200-220 (MFWVQVLLAGLVVPLLLGATL) traverse the membrane as a helical segment. The Cytoplasmic portion of the chain corresponds to 221 to 417 (TYTYRHCWPH…DLRSRLQRGP (197 aa)). The Death domain maps to 332 to 413 (GPQLYDVMDA…GCVEDLRSRL (82 aa)). (Microbial infection) N-beta-linked (GlcNAc) arginine glycosylation is present at Arg-352.

Homodimer. Interacts strongly via the death domains with TNFRSF1 and TRADD to activate at least two distinct signaling cascades, apoptosis and NF-kappa-B signaling. Interacts with BAG4. In terms of processing, (Microbial infection) Glycosylated at Arg-352 by enteropathogenic E.coli protein NleB1. Glycosylated. Abundantly expressed in thymocytes and lymphocytes. Detected in lymphocyte-rich tissues such as thymus, colon, intestine, and spleen. Also found in the prostate.

It is found in the cell membrane. Its subcellular location is the secreted. Its function is as follows. Receptor for TNFSF12/APO3L/TWEAK. Interacts directly with the adapter TRADD. Mediates activation of NF-kappa-B and induces apoptosis. May play a role in regulating lymphocyte homeostasis. In Homo sapiens (Human), this protein is Tumor necrosis factor receptor superfamily member 25 (TNFRSF25).